The chain runs to 511 residues: Maturase K (511 aa).

The protein belongs to the intron maturase 2 family. MatK subfamily.

It localises to the plastid. It is found in the chloroplast. In terms of biological role, usually encoded in the trnK tRNA gene intron. Probably assists in splicing its own and other chloroplast group II introns. This Chloranthus spicatus (Chulantree) protein is Maturase K.